The primary structure comprises 416 residues: Histidine--tRNA ligase (416 aa).

This sequence belongs to the class-II aminoacyl-tRNA synthetase family. Homodimer.

It is found in the cytoplasm. The catalysed reaction is tRNA(His) + L-histidine + ATP = L-histidyl-tRNA(His) + AMP + diphosphate + H(+). The polypeptide is Histidine--tRNA ligase (Clostridium kluyveri (strain NBRC 12016)).